The chain runs to 172 residues: Small ribosomal subunit protein uS5 (172 aa).

Positions 17–80 constitute an S5 DRBM domain; sequence LREKMIAVNR…DEARRKMIKV (64 aa).

Belongs to the universal ribosomal protein uS5 family. In terms of assembly, part of the 30S ribosomal subunit. Contacts proteins S4 and S8.

Its function is as follows. With S4 and S12 plays an important role in translational accuracy. In terms of biological role, located at the back of the 30S subunit body where it stabilizes the conformation of the head with respect to the body. This chain is Small ribosomal subunit protein uS5, found in Polynucleobacter asymbioticus (strain DSM 18221 / CIP 109841 / QLW-P1DMWA-1) (Polynucleobacter necessarius subsp. asymbioticus).